The chain runs to 43 residues: Cytin chain A (43 aa).

This sequence belongs to the protease inhibitor I13 (potato type I serine protease inhibitor) family. As to quaternary structure, heterodimer of an A chain and a B chain, linked by a disulfide bond.

Its function is as follows. Inhibitor of chymotrypsin. In Theromyzon tessulatum (Duck leech), this protein is Cytin chain A.